Reading from the N-terminus, the 258-residue chain is Histidine/lysine/arginine/ornithine transport ATP-binding protein HisP (258 aa).

In terms of domain architecture, ABC transporter spans 7–253; sequence LHVIDLHKRY…PQSPRLQQFL (247 aa). Residues Ser41, Gly42, Gly44, Lys45, Ser46, and Thr47 each coordinate ATP.

This sequence belongs to the ABC transporter superfamily. The HisPMQJ complex is composed of two ATP-binding proteins (HisP), two transmembrane proteins (HisM and HisQ) and a solute-binding protein (HisJ). The HisPMQ-ArgT complex is composed of two ATP-binding proteins (HisP), two transmembrane proteins (HisM and HisQ) and a solute-binding protein (ArgT).

It is found in the cell inner membrane. The enzyme catalyses a polar amino acid(out) + ATP + H2O = a polar amino acid(in) + ADP + phosphate + H(+). It catalyses the reaction L-histidine(out) + ATP + H2O = L-histidine(in) + ADP + phosphate + H(+). It carries out the reaction L-lysine(out) + ATP + H2O = L-lysine(in) + ADP + phosphate + H(+). The catalysed reaction is L-arginine(out) + ATP + H2O = L-arginine(in) + ADP + phosphate + H(+). The enzyme catalyses L-ornithine(out) + ATP + H2O = L-ornithine(in) + ADP + phosphate + H(+). With respect to regulation, isolated, soluble HisP has a very low ATPase activity. ATPase activity is slightly increased in the presence of HisM and HisQ, and strongly increased when HisJ is also present. Functionally, part of the ABC transporter complex HisPMQJ involved in histidine transport. Is also part of the ABC transporter complex HisPMQ-ArgT involved in lysine/arginine/ornithine transport. Shows ATPase activity. Responsible for energy coupling to the transport system. This Salmonella typhimurium (strain LT2 / SGSC1412 / ATCC 700720) protein is Histidine/lysine/arginine/ornithine transport ATP-binding protein HisP.